Here is a 446-residue protein sequence, read N- to C-terminus: NADH-dependent phenylglyoxylate dehydrogenase subunit beta (446 aa).

4 consecutive 4Fe-4S ferredoxin-type domains span residues 6–35 (STIAFDPAKCDGCGDCMTACAQAKTGTDDI), 49–80 (ADKTFELALCRQCADPKCVTVCPAGALNKDGT), 82–111 (GVIGWDATKCVDCLLCTVGCAYAGIALDEA), and 109–141 (DEATGHVAKCDTCDGNPACVPACPHGALKHITT).

Dimer of heteropentamers composed of an alpha (PadG), a beta (PadI), a gamma (PadE), a delta (PadF) and an epsilon (PadH) subunit. Requires [4Fe-4S] cluster as cofactor.

It carries out the reaction phenylglyoxylate + NAD(+) + CoA = benzoyl-CoA + CO2 + NADH. Its activity is regulated as follows. Activated by magnesium ions and thiamine diphosphate. Functionally, involved in the anaerobic metabolism of phenylalanine and phenylacetate. Catalyzes the oxidative decarboxylation of phenylglyoxylate to benzoyl-CoA and CO(2). It can also react slowly with 2-oxo-3-methylbutanoate and use different electron acceptors such as benzyl viologen, methyl viologen, FAD or FMN, but NAD seems to be the physiological electron acceptor. Also catalyzes an isotope exchange between CO(2) and the carboxyl group which proves partial or complete reversibility of the oxidative decarboxylation reaction. In Aromatoleum evansii (Azoarcus evansii), this protein is NADH-dependent phenylglyoxylate dehydrogenase subunit beta (padI).